The chain runs to 511 residues: Putative thymidine phosphorylase (511 aa).

It belongs to the thymidine/pyrimidine-nucleoside phosphorylase family. Type 2 subfamily.

It catalyses the reaction thymidine + phosphate = 2-deoxy-alpha-D-ribose 1-phosphate + thymine. This is Putative thymidine phosphorylase from Bradyrhizobium sp. (strain BTAi1 / ATCC BAA-1182).